A 215-amino-acid chain; its full sequence is [PSI+] inducibility protein 3 (215 aa).

S2 carries the N-acetylserine modification. 2 positions are modified to phosphoserine: S52 and S55. The 60-residue stretch at 54 to 113 (ASLEYVEALYQFDPQQDGDLGLKPGDKVQLLEKLSPEWYKGSCNGRTGIFPANYVKPAFS) folds into the SH3 domain. K80 is covalently cross-linked (Glycyl lysine isopeptide (Lys-Gly) (interchain with G-Cter in ubiquitin)). The interval 114-189 (GSNGPSNLPP…HQSSHSHLKS (76 aa)) is disordered. The PY motif signature appears at 124–127 (PPQY).

The protein belongs to the LSB1 family. In terms of assembly, interacts with LAS17, RSP5 and SUP35. Ubiquitinated by RSP5. Ubiquitination reduces the protein abundance and its prion-inducing ability.

Its subcellular location is the cytoplasm. The protein localises to the nucleus. The protein resides in the cytoskeleton. It localises to the actin patch. In terms of biological role, overproduction promotes the de novo induction of the [PSI+] prion form of SUP35. The prion-inducing effect depends on the association with the actin cytoskeleton. Also implicated in prion maintenance during heat stress. This chain is [PSI+] inducibility protein 3 (PIN3), found in Saccharomyces cerevisiae (strain ATCC 204508 / S288c) (Baker's yeast).